A 225-amino-acid polypeptide reads, in one-letter code: Thylakoid lumenal 17.9 kDa protein, chloroplastic (225 aa).

It is found in the plastid. It localises to the chloroplast thylakoid lumen. The polypeptide is Thylakoid lumenal 17.9 kDa protein, chloroplastic (Arabidopsis thaliana (Mouse-ear cress)).